Reading from the N-terminus, the 1042-residue chain is Protein phosphatase Slingshot homolog 1 (1042 aa).

The span at Met-1–Pro-12 shows a compositional bias: polar residues. The interval Met-1–Asp-29 is disordered. Ala-2 bears the N-acetylalanine mark. Over residues Ser-13 to Ser-22 the composition is skewed to low complexity. Residues Ser-37 and Ser-57 each carry the phosphoserine modification. The 56-residue stretch at Glu-249–Gly-304 folds into the DEK-C domain. Residues Lys-308–Ala-449 enclose the Tyrosine-protein phosphatase domain. Cys-393 functions as the Phosphocysteine intermediate in the catalytic mechanism. The residue at position 516 (Ser-516) is a Phosphoserine. Disordered stretches follow at residues Phe-576–Gln-609, Met-668–Asp-766, Ile-858–Thr-900, and Pro-915–Leu-942. Residues Ser-675–Pro-693 are compositionally biased toward polar residues. Low complexity predominate over residues Ala-697–Ala-712. Polar residues predominate over residues Leu-886–Thr-900. Ser-889 bears the Phosphoserine mark. Positions Ser-889 to Ser-1042 are interaction with YWHAG. Residues Ser-917–Ser-935 are compositionally biased toward low complexity. Ser-970 bears the Phosphoserine mark. Residues Ser-985–Asp-995 are compositionally biased toward polar residues. Positions Ser-985–Ser-1042 are disordered.

It belongs to the protein-tyrosine phosphatase family. In terms of assembly, interacts with the 14-3-3 proteins YWHAB, YWHAG, YWHAQ, and YWHAZ. Interaction with 14-3-3 proteins inhibits phosphatase activity and also blocks recruitment to lamellipodia and stimulation by actin. Interacts with actin and this stimulates phosphatase activity. Interacts with LIMK1. Post-translationally, phosphorylated. Inhibitory phosphorylation by PAK4 promotes binding to YWHAZ. Phosphorylation at Ser-970 is decreased by stimuli which promote actin reorganization and lamellipodia formation. Can be dephosphorylated and activated by PPP3CA/calcineurin A. Phosphorylation decreases immediately prior to telophase. In terms of tissue distribution, expressed in brain, heart, kidney and thymus. Also expressed at lower levels in liver, skeletal muscle, small intestine and spleen.

It is found in the cytoplasm. Its subcellular location is the cytoskeleton. The protein localises to the cleavage furrow. The protein resides in the midbody. The enzyme catalyses O-phospho-L-tyrosyl-[protein] + H2O = L-tyrosyl-[protein] + phosphate. The catalysed reaction is O-phospho-L-seryl-[protein] + H2O = L-seryl-[protein] + phosphate. It catalyses the reaction O-phospho-L-threonyl-[protein] + H2O = L-threonyl-[protein] + phosphate. Its function is as follows. Protein phosphatase which regulates actin filament dynamics. Dephosphorylates and activates the actin binding/depolymerizing factor cofilin, which subsequently binds to actin filaments and stimulates their disassembly. Inhibitory phosphorylation of cofilin is mediated by LIMK1, which may also be dephosphorylated and inactivated by this protein. In Mus musculus (Mouse), this protein is Protein phosphatase Slingshot homolog 1.